A 522-amino-acid polypeptide reads, in one-letter code: Sensory neuron membrane protein 2 (522 aa).

Topologically, residues 1-7 (MLGKHTK) are cytoplasmic. A helical transmembrane segment spans residues 8–28 (LFFGVSLVALIVSVILAAWGF). Topologically, residues 29-469 (PKIVSKQIQK…QSHTLLGYVE (441 aa)) are extracellular. N-linked (GlcNAc...) asparagine glycosylation is found at Asn-44, Asn-67, Asn-104, Asn-166, Asn-191, Asn-228, Asn-272, Asn-314, and Asn-343. Cystine bridges form between Cys-268/Cys-338, Cys-299/Cys-362, and Cys-340/Cys-351. A helical membrane pass occupies residues 470–490 (AVRWALLAIAIVATAISAIAV). At 491-522 (ARSGLIPVWPRNANSVSFILSPHPNSDVNKVH) the chain is on the cytoplasmic side.

The protein belongs to the CD36 family. Detected in both male and female antennal tissues. Expression is two to three fold higher in male compared to female antenna. Detected at low levels in all body tissues except the female abdomen.

It localises to the cell membrane. Functionally, plays an olfactory role that is not restricted to pheromone sensitivity. The protein is Sensory neuron membrane protein 2 of Ostrinia furnacalis (Asian corn borer).